The following is a 110-amino-acid chain: Large ribosomal subunit protein uL22 (110 aa).

It belongs to the universal ribosomal protein uL22 family. Part of the 50S ribosomal subunit.

In terms of biological role, this protein binds specifically to 23S rRNA; its binding is stimulated by other ribosomal proteins, e.g. L4, L17, and L20. It is important during the early stages of 50S assembly. It makes multiple contacts with different domains of the 23S rRNA in the assembled 50S subunit and ribosome. Its function is as follows. The globular domain of the protein is located near the polypeptide exit tunnel on the outside of the subunit, while an extended beta-hairpin is found that lines the wall of the exit tunnel in the center of the 70S ribosome. The chain is Large ribosomal subunit protein uL22 from Enterobacter sp. (strain 638).